We begin with the raw amino-acid sequence, 317 residues long: Transaldolase (317 aa).

Residue Lys-126 is the Schiff-base intermediate with substrate of the active site.

Belongs to the transaldolase family. Type 1 subfamily. In terms of assembly, homodimer.

It is found in the cytoplasm. It carries out the reaction D-sedoheptulose 7-phosphate + D-glyceraldehyde 3-phosphate = D-erythrose 4-phosphate + beta-D-fructose 6-phosphate. Its pathway is carbohydrate degradation; pentose phosphate pathway; D-glyceraldehyde 3-phosphate and beta-D-fructose 6-phosphate from D-ribose 5-phosphate and D-xylulose 5-phosphate (non-oxidative stage): step 2/3. Its function is as follows. Transaldolase is important for the balance of metabolites in the pentose-phosphate pathway. The sequence is that of Transaldolase from Burkholderia ambifaria (strain ATCC BAA-244 / DSM 16087 / CCUG 44356 / LMG 19182 / AMMD) (Burkholderia cepacia (strain AMMD)).